The following is a 204-amino-acid chain: Gellan lyase (204 aa).

Multimer.

Its subcellular location is the secreted. The catalysed reaction is Eliminative cleavage of beta-D-glucopyranosyl-(1-&gt;4)-beta-D-glucopyranosyluronate bonds of gellan backbone releasing tetrasaccharides containing a 4-deoxy-4,5-unsaturated D-glucopyranosyluronic acid at the non-reducing end. The tetrasaccharide produced from deacetylated gellan is beta-D-4-deoxy-Delta(4)-GlcAp-(1-&gt;4)-beta-D-Glcp-(1-&gt;4)-alpha-L-Rhap-(1-&gt;3)-beta-D-Glcp.. With respect to regulation, activity is stimulated by zinc, potassium, lithium, cobalt, sodium, calcium, iron, manganase, magnesium and mercury ions at a concentration of 1 mM, but inhibited by copper ions at a concentration of 1 mM. Activity is inhibited by potassium, sodium and magnesium ions at a concentration of 1 M. Activity is inhibited by urea, EDTA, dithiothreitol, p-CMB, PSF, natrium lauryl sulfate and N-bromosuccinimide. Its function is as follows. Cleaves the glycosidic bonds of gellan backbone and releases tetrasaccharide units of glucuronyl-glucosyl-rhamnosyl-glucose with unsaturated glucuronic acid at the non-reducing terminal. The enzyme is highly specific to the heteropolysaccharide gellan. In Geobacillus stearothermophilus (Bacillus stearothermophilus), this protein is Gellan lyase.